The chain runs to 614 residues: Sodium- and chloride-dependent betaine transporter (614 aa).

The Cytoplasmic portion of the chain corresponds to 1–44; sequence MDRKVTVHEDGCPVVSWVPEEGEMMDQKDKDQVKDRGQWTNKME. 3 consecutive transmembrane segments (helical) span residues 45–65, 73–92, and 117–137; these read FVLSVAGEIIGLGNVWRFPYL, AFFIPYFIFFFSCGIPVFFL, and GIGMASVVIESYLNIYYIIIL. Over 138–210 the chain is Extracellular; the sequence is AWALFYLFSS…SGIHDLGSLR (73 aa). N-linked (GlcNAc...) asparagine glycosylation is found at Asn171 and Asn183. The next 9 helical transmembrane spans lie at 211–229, 238–255, 291–308, 320–341, 374–393, 423–441, 458–478, 499–518, and 538–556; these read WELALCLLLAWIICYFCIW, VVYFTATFPYLMLIILLI, IFFSFAICQGCLTALGSY, IALCFLNSATSFVAGFVVFSIL, MPLSQLWSCLFFLMLLFLGL, LLILAVAIVCYLMGLLLVT, GICLLFLSLFEVICIGWVYGA, ISWLFLTPGLCLATFFFSLS, and IGWLLAFSSMACVPLFIII. The Cytoplasmic portion of the chain corresponds to 557 to 614; it reads TLLKTQGSFKKRLQRLITPDPSLPQPGRRSPQDGSSAQNCSTSPVKQELIAWEKETHL. Residues 574 to 600 form a disordered region; that stretch reads TPDPSLPQPGRRSPQDGSSAQNCSTSP. Residue Ser586 is modified to Phosphoserine. Residues 588 to 600 are compositionally biased toward polar residues; that stretch reads QDGSSAQNCSTSP.

The protein belongs to the sodium:neurotransmitter symporter (SNF) (TC 2.A.22) family. SLC6A12 subfamily. In terms of assembly, interacts with LIN7C.

The protein resides in the basolateral cell membrane. The protein localises to the cell membrane. The catalysed reaction is 4-aminobutanoate(out) + chloride(out) + 3 Na(+)(out) = 4-aminobutanoate(in) + chloride(in) + 3 Na(+)(in). The enzyme catalyses glycine betaine(out) + 2 chloride(out) + 3 Na(+)(out) = glycine betaine(in) + 2 chloride(in) + 3 Na(+)(in). Its function is as follows. Transporter that mediates cellular uptake of betaine and GABA in a sodium- and chloride-dependent process. May have a role in regulation of GABAergic transmission in the brain through the reuptake of GABA into presynaptic terminals, as well as in osmotic regulation. Probably also involved in renal and hepatic osmotic regulation. The protein is Sodium- and chloride-dependent betaine transporter (Slc6a12) of Rattus norvegicus (Rat).